The following is a 129-amino-acid chain: Acyl carrier protein 2, chloroplastic (129 aa).

A chloroplast-targeting transit peptide spans 1-49 (MASAAASAVSFARPVKAICVNSVSFSALRKDNVSFRLQPVPQRFSVCCA). The Carrier domain maps to 52–127 (KETVEKVCDI…DAANLIDSLV (76 aa)). Residue Ser87 is modified to O-(pantetheine 4'-phosphoryl)serine.

It belongs to the acyl carrier protein (ACP) family. 4'-phosphopantetheine is transferred from CoA to a specific serine of apo-ACP by acpS. This modification is essential for activity because fatty acids are bound in thioester linkage to the sulfhydryl of the prosthetic group.

Its subcellular location is the plastid. The protein localises to the chloroplast. The protein operates within lipid metabolism; fatty acid biosynthesis. Its function is as follows. Carrier of the growing fatty acid chain in fatty acid biosynthesis. This chain is Acyl carrier protein 2, chloroplastic (ACL1.2), found in Hordeum vulgare (Barley).